A 511-amino-acid chain; its full sequence is Histidine ammonia-lyase (511 aa).

Residues 142–144 (ASG) constitute a cross-link (5-imidazolinone (Ala-Gly)). 2,3-didehydroalanine (Ser) is present on Ser143.

The protein belongs to the PAL/histidase family. Post-translationally, contains an active site 4-methylidene-imidazol-5-one (MIO), which is formed autocatalytically by cyclization and dehydration of residues Ala-Ser-Gly.

Its subcellular location is the cytoplasm. The enzyme catalyses L-histidine = trans-urocanate + NH4(+). The protein operates within amino-acid degradation; L-histidine degradation into L-glutamate; N-formimidoyl-L-glutamate from L-histidine: step 1/3. The protein is Histidine ammonia-lyase of Chelativorans sp. (strain BNC1).